An 838-amino-acid polypeptide reads, in one-letter code: Periplasmic nitrate reductase (838 aa).

The tat-type signal signal peptide spans 1–29 (MKVSRRAFIKQTAAAATASVAGVTLPAGA). A 4Fe-4S Mo/W bis-MGD-type domain is found at 41–97 (LKWSKAPCRFCGTGCGVEVAVKDNRVVATQGDPKAEVNRGLNCVKGYFLSKIMYGKD). [4Fe-4S] cluster-binding residues include cysteine 48, cysteine 51, cysteine 55, and cysteine 83. Residues lysine 85, glutamine 152, asparagine 177, cysteine 181, 214–221 (WGSNMAEM), 245–249 (STFTH), methionine 382, glutamine 386, asparagine 492, 518–519 (SD), lysine 541, aspartate 568, and 728–737 (TGRVLEHWHS) contribute to the Mo-bis(molybdopterin guanine dinucleotide) site. Tryptophan 804 contributes to the substrate binding site. 2 residues coordinate Mo-bis(molybdopterin guanine dinucleotide): asparagine 812 and lysine 829.

It belongs to the prokaryotic molybdopterin-containing oxidoreductase family. NasA/NapA/NarB subfamily. Component of the periplasmic nitrate reductase NapAB complex composed of NapA and NapB. The cofactor is [4Fe-4S] cluster. Requires Mo-bis(molybdopterin guanine dinucleotide) as cofactor. Post-translationally, predicted to be exported by the Tat system. The position of the signal peptide cleavage has not been experimentally proven.

Its subcellular location is the periplasm. It catalyses the reaction 2 Fe(II)-[cytochrome] + nitrate + 2 H(+) = 2 Fe(III)-[cytochrome] + nitrite + H2O. Its function is as follows. Catalytic subunit of the periplasmic nitrate reductase complex NapAB. Receives electrons from NapB and catalyzes the reduction of nitrate to nitrite. In Ralstonia pickettii (strain 12J), this protein is Periplasmic nitrate reductase.